Here is a 367-residue protein sequence, read N- to C-terminus: Glutamate 5-kinase (367 aa).

Lysine 10 is a binding site for ATP. The substrate site is built by serine 50, aspartate 137, and asparagine 149. ATP contacts are provided by residues threonine 169–aspartate 170 and threonine 211–lysine 217. The 79-residue stretch at alanine 275–glutamate 353 folds into the PUA domain.

It belongs to the glutamate 5-kinase family.

Its subcellular location is the cytoplasm. It catalyses the reaction L-glutamate + ATP = L-glutamyl 5-phosphate + ADP. The protein operates within amino-acid biosynthesis; L-proline biosynthesis; L-glutamate 5-semialdehyde from L-glutamate: step 1/2. In terms of biological role, catalyzes the transfer of a phosphate group to glutamate to form L-glutamate 5-phosphate. In Cronobacter sakazakii (strain ATCC BAA-894) (Enterobacter sakazakii), this protein is Glutamate 5-kinase.